The chain runs to 154 residues: Myoglobin (154 aa).

Positions 2-148 (GLSDGEWQLV…FRNDIAAKYK (147 aa)) constitute a Globin domain. Ser4 is subject to Phosphoserine. His65 serves as a coordination point for nitrite. His65 contacts O2. Thr68 is modified (phosphothreonine). His94 contributes to the heme b binding site.

The protein belongs to the globin family. As to quaternary structure, monomeric.

It is found in the cytoplasm. The protein resides in the sarcoplasm. It carries out the reaction Fe(III)-heme b-[protein] + nitric oxide + H2O = Fe(II)-heme b-[protein] + nitrite + 2 H(+). The enzyme catalyses H2O2 + AH2 = A + 2 H2O. Its function is as follows. Monomeric heme protein which primary function is to store oxygen and facilitate its diffusion within muscle tissues. Reversibly binds oxygen through a pentacoordinated heme iron and enables its timely and efficient release as needed during periods of heightened demand. Depending on the oxidative conditions of tissues and cells, and in addition to its ability to bind oxygen, it also has a nitrite reductase activity whereby it regulates the production of bioactive nitric oxide. Under stress conditions, like hypoxia and anoxia, it also protects cells against reactive oxygen species thanks to its pseudoperoxidase activity. This is Myoglobin (MB) from Lutra lutra (European river otter).